Consider the following 281-residue polypeptide: Dexamethasone-induced Ras-related protein 1 (281 aa).

Position 11 is an S-nitrosocysteine (cysteine 11). 31–38 (GSSKVGKT) contacts GTP. The Effector region signature appears at 53-61 (YTPTIEDFH). GTP is bound by residues 78 to 82 (DTSGN) and 145 to 148 (NKGD). Cysteine 278 carries the post-translational modification Cysteine methyl ester. Cysteine 278 is lipidated: S-farnesyl cysteine. Residues 279 to 281 (VIS) constitute a propeptide, removed in mature form.

It belongs to the small GTPase superfamily. RasD family. As to quaternary structure, forms a ternary complex with CAPON and NOS1. Component of a complex, at least composed of APBB1, RASD1/DEXRAS1 and APP. Interacts with APBB1/FE65. S-nitrosylation stimulates guanine-nucleotide exchange activity. In terms of tissue distribution, expressed in a variety of tissues including heart, cardiovascular tissues, brain, placenta, lung, liver, skeletal muscle, kidney, pancreas, gastrointestinal and reproductive tissues.

The protein localises to the cell membrane. Its subcellular location is the cytoplasm. The protein resides in the perinuclear region. It is found in the nucleus. Functionally, small GTPase. Negatively regulates the transcription regulation activity of the APBB1/FE65-APP complex via its interaction with APBB1/FE65. This Homo sapiens (Human) protein is Dexamethasone-induced Ras-related protein 1 (RASD1).